Here is a 272-residue protein sequence, read N- to C-terminus: 3-methyl-2-oxobutanoate hydroxymethyltransferase (272 aa).

Mg(2+) contacts are provided by Asp51 and Asp90. Residues 51-52 (DS), Asp90, and Lys118 contribute to the 3-methyl-2-oxobutanoate site. Glu120 is a Mg(2+) binding site. Glu187 serves as the catalytic Proton acceptor.

Belongs to the PanB family. Homodecamer; pentamer of dimers. It depends on Mg(2+) as a cofactor.

Its subcellular location is the cytoplasm. It carries out the reaction 3-methyl-2-oxobutanoate + (6R)-5,10-methylene-5,6,7,8-tetrahydrofolate + H2O = 2-dehydropantoate + (6S)-5,6,7,8-tetrahydrofolate. It participates in cofactor biosynthesis; (R)-pantothenate biosynthesis; (R)-pantoate from 3-methyl-2-oxobutanoate: step 1/2. Catalyzes the reversible reaction in which hydroxymethyl group from 5,10-methylenetetrahydrofolate is transferred onto alpha-ketoisovalerate to form ketopantoate. The chain is 3-methyl-2-oxobutanoate hydroxymethyltransferase from Xylella fastidiosa (strain 9a5c).